The primary structure comprises 339 residues: Biotin synthase (339 aa).

The 228-residue stretch at Ser-51–Arg-278 folds into the Radical SAM core domain. 3 residues coordinate [4Fe-4S] cluster: Cys-66, Cys-70, and Cys-73. [2Fe-2S] cluster-binding residues include Cys-110, Cys-141, Cys-201, and Arg-273.

It belongs to the radical SAM superfamily. Biotin synthase family. In terms of assembly, homodimer. [4Fe-4S] cluster is required as a cofactor. [2Fe-2S] cluster serves as cofactor.

It carries out the reaction (4R,5S)-dethiobiotin + (sulfur carrier)-SH + 2 reduced [2Fe-2S]-[ferredoxin] + 2 S-adenosyl-L-methionine = (sulfur carrier)-H + biotin + 2 5'-deoxyadenosine + 2 L-methionine + 2 oxidized [2Fe-2S]-[ferredoxin]. The protein operates within cofactor biosynthesis; biotin biosynthesis; biotin from 7,8-diaminononanoate: step 2/2. Its function is as follows. Catalyzes the conversion of dethiobiotin (DTB) to biotin by the insertion of a sulfur atom into dethiobiotin via a radical-based mechanism. The protein is Biotin synthase of Herminiimonas arsenicoxydans.